Reading from the N-terminus, the 138-residue chain is Large ribosomal subunit protein uL16 (138 aa).

The segment covering 1 to 13 (MLQPARRKYRKEQ) has biased composition (basic residues). The interval 1–21 (MLQPARRKYRKEQKGRNTGIA) is disordered.

It belongs to the universal ribosomal protein uL16 family. In terms of assembly, part of the 50S ribosomal subunit.

Functionally, binds 23S rRNA and is also seen to make contacts with the A and possibly P site tRNAs. The chain is Large ribosomal subunit protein uL16 from Albidiferax ferrireducens (strain ATCC BAA-621 / DSM 15236 / T118) (Rhodoferax ferrireducens).